The chain runs to 313 residues: Ribonuclease HIII (313 aa).

One can recognise an RNase H type-2 domain in the interval 98 to 313; it reads YNCIGSDEAG…REKALKLIKK (216 aa). A divalent metal cation-binding residues include Asp104, Glu105, and Asp208.

The protein belongs to the RNase HII family. RnhC subfamily. It depends on Mn(2+) as a cofactor. Mg(2+) is required as a cofactor.

The protein resides in the cytoplasm. It catalyses the reaction Endonucleolytic cleavage to 5'-phosphomonoester.. In terms of biological role, endonuclease that specifically degrades the RNA of RNA-DNA hybrids. The chain is Ribonuclease HIII from Macrococcus caseolyticus (strain JCSC5402) (Macrococcoides caseolyticum).